We begin with the raw amino-acid sequence, 173 residues long: Terpene cyclase subB (173 aa).

The next 4 helical transmembrane spans lie at 11 to 31 (PGYLEVAWIADTCKLLMGLGW), 51 to 71 (ALMPLCCNFAWELTYAVIYPF), 112 to 132 (LPFIFIICIAAWTTAHLALAL), and 141 to 161 (AFSAYGCQLLLSVGALCQLLS).

Belongs to the paxB family.

It is found in the membrane. The protein operates within secondary metabolite biosynthesis; terpenoid biosynthesis. Functionally, terpene cyclase; part of the gene cluster that mediates the biosynthesis of the immunosuppressants subglutinols, meroterpenoids consisting of an alpha-pyrone (4-hydroxy-5,6-dimethyl-2-pyrone) moiety attached to a decalin core fused to a five-membered cyclic ether carrying a prenylside chain. The first step of the pathway is the synthesis of the alpha-pyrone moiety by the polyketide synthase subA via condensation of one acetyl-CoA starter unit with 3 malonyl-CoA units and 2 methylations. The alpha-pyrone is then combined with geranylgeranyl pyrophosphate (GGPP) formed by the GGPP synthase subD through the action of the prenyltransferase subC to yield a linear alpha-pyrone diterpenoid. Subsequent steps in the subglutinol biosynthetic pathway involve the decalin core formation, which is thought to be initiated by the epoxidation of the C10-C11 olefin by the FAD-dependent oxidoreductase subE. The following cyclization cascade would be catalyzed by the terpene cyclase subB. Lastly, the FAD-dependent dehydrogenase subF probably catalyzes the five-membered cyclic ether formation to complete the formation of subglutinol A. Subsequent redox reactions appear to give rise to subglutinol C and D, however, it remains unclear which enzymes are responsible for these transformations. SubD may have secondary function in the conversion of the identified subglutinols to subglutinol analog 45, which seems to be the major product of the cluster. The protein is Terpene cyclase subB of Metarhizium robertsii (strain ARSEF 23 / ATCC MYA-3075) (Metarhizium anisopliae (strain ARSEF 23)).